Consider the following 237-residue polypeptide: RNA-binding protein 38 (237 aa).

Residues 1–24 (MLLQPACSPSVFPRPSAAPSAMHG) are disordered. One can recognise an RRM domain in the interval 32 to 109 (TKIFVGGLPY…RKANVNLAYL (78 aa)).

Belongs to the RBM38 family. Expressed in cardiac and skeletal muscle tissues.

It localises to the cytoplasm. Its subcellular location is the cytosol. It is found in the nucleus. Functionally, RNA-binding protein that specifically bind the 3'-UTR of CDKN1A transcripts, leading to maintain the stability of CDKN1A transcripts, thereby acting as a mediator of the p53/TP53 family to regulate CDKN1A. CDKN1A is a cyclin-dependent kinase inhibitor transcriptionally regulated by the p53/TP53 family to induce cell cycle arrest. Has the ability to induce cell cycle arrest in G1 and maintain the stability of CDKN1A transcripts induced by p53/TP53. Also acts as a mRNA splicing factor. Specifically regulates the expression of FGFR2-IIIb, an epithelial cell-specific isoform of FGFR2. Plays a role in myogenic differentiation. In Mus musculus (Mouse), this protein is RNA-binding protein 38 (Rbm38).